A 260-amino-acid chain; its full sequence is UPF0294 protein YPO1077/y3099/YP_2772 (260 aa).

It belongs to the UPF0294 family.

The protein localises to the cytoplasm. The sequence is that of UPF0294 protein YPO1077/y3099/YP_2772 from Yersinia pestis.